The chain runs to 421 residues: Synaptotagmin-15 (421 aa).

Residues 1-4 are Extracellular-facing; the sequence is MAEQ. A helical; Signal-anchor for type III membrane protein transmembrane segment spans residues 5–29; it reads LALVIGGTIGGLLLLLLIGASCCLW. Topologically, residues 30 to 421 are cytoplasmic; the sequence is RRFCATLTYE…WHALCRTTEP (392 aa). Residues 47–68 are disordered; it reads MATTAASSGQRDRPCQPHARTQ. C2 domains follow at residues 147–264 and 278–399; these read CLGR…RRVI and EFGD…EHWD.

Belongs to the synaptotagmin family. As to quaternary structure, homodimer.

The protein resides in the cell membrane. May be involved in the trafficking and exocytosis of secretory vesicles in non-neuronal tissues. This Homo sapiens (Human) protein is Synaptotagmin-15 (SYT15).